Here is a 135-residue protein sequence, read N- to C-terminus: C-type lectin LmsL (135 aa).

Disulfide bonds link Cys3-Cys14, Cys31-Cys131, Cys38-Cys133, and Cys106-Cys123. Residues 10–132 (MNGLCYKIFD…CESKNAFLCQ (123 aa)) enclose the C-type lectin domain. Ca(2+) is bound by residues Gln96, Asp98, Glu104, Asn119, and Asp120. The Galactose-binding signature appears at 96-98 (QPD).

The protein belongs to the true venom lectin family. Homodimer; disulfide-linked. In terms of tissue distribution, expressed by the venom gland.

Its subcellular location is the secreted. Galactose-binding protein which recognizes specific carbohydrate structures and agglutinates a variety of animal cells by binding to cell-surface glycoproteins and glycolipids. Is a calcium-dependent lectin. Shows high hemagglutinating activity, that is inhibited by lactose, galactose and inositol. This is C-type lectin LmsL from Lachesis stenophrys (Central American bushmaster).